Consider the following 288-residue polypeptide: Elongation factor Ts (288 aa).

The interval 82–85 is involved in Mg(2+) ion dislocation from EF-Tu; sequence TDFV.

This sequence belongs to the EF-Ts family.

The protein resides in the cytoplasm. Functionally, associates with the EF-Tu.GDP complex and induces the exchange of GDP to GTP. It remains bound to the aminoacyl-tRNA.EF-Tu.GTP complex up to the GTP hydrolysis stage on the ribosome. This Chlorobium chlorochromatii (strain CaD3) protein is Elongation factor Ts.